A 151-amino-acid chain; its full sequence is Probable cGMP 3',5'-cyclic phosphodiesterase subunit delta (151 aa).

Belongs to the PDE6D/unc-119 family. Interacts with Pde6.

It localises to the nucleus. Its subcellular location is the cytoplasm. The protein is Probable cGMP 3',5'-cyclic phosphodiesterase subunit delta of Drosophila mojavensis (Fruit fly).